Here is a 330-residue protein sequence, read N- to C-terminus: Beta-ketoacyl-[acyl-carrier-protein] synthase III (330 aa).

Catalysis depends on residues Cys115 and His255. The ACP-binding stretch occupies residues 256-260 (QANFR). The active site involves Asn285.

This sequence belongs to the thiolase-like superfamily. FabH family. Homodimer.

Its subcellular location is the cytoplasm. It catalyses the reaction malonyl-[ACP] + acetyl-CoA + H(+) = 3-oxobutanoyl-[ACP] + CO2 + CoA. It participates in lipid metabolism; fatty acid biosynthesis. In terms of biological role, catalyzes the condensation reaction of fatty acid synthesis by the addition to an acyl acceptor of two carbons from malonyl-ACP. Catalyzes the first condensation reaction which initiates fatty acid synthesis and may therefore play a role in governing the total rate of fatty acid production. Possesses both acetoacetyl-ACP synthase and acetyl transacylase activities. Its substrate specificity determines the biosynthesis of branched-chain and/or straight-chain of fatty acids. The chain is Beta-ketoacyl-[acyl-carrier-protein] synthase III from Helicobacter pylori (strain P12).